Here is a 601-residue protein sequence, read N- to C-terminus: Glutathione-regulated potassium-efflux system protein KefB (601 aa).

The next 13 helical transmembrane spans lie at 4–24, 29–49, 55–75, 87–107, 115–135, 152–172, 177–197, 207–227, 230–250, 268–288, 291–311, 324–344, and 356–376; these read SDFL…VPLA, IGAV…GLGF, EILH…GLEL, IFGV…GLLM, AAVV…LQLM, VLLF…LLAG, HFDW…LIGG, FIAA…LVLG, LFMD…GVLL, GLLL…GVLY, LLWV…VLYL, MQFA…FSTA, and ALLL…MKLV. The RCK N-terminal domain occupies 400–519; that stretch reads KPQVIVVGFG…AGVTQFSRET (120 aa).

This sequence belongs to the monovalent cation:proton antiporter 2 (CPA2) transporter (TC 2.A.37) family. KefB subfamily. As to quaternary structure, interacts with the regulatory subunit KefG.

It is found in the cell inner membrane. Pore-forming subunit of a potassium efflux system that confers protection against electrophiles. Catalyzes K(+)/H(+) antiport. In Escherichia coli O139:H28 (strain E24377A / ETEC), this protein is Glutathione-regulated potassium-efflux system protein KefB.